A 519-amino-acid chain; its full sequence is O-fucosyltransferase 31 (519 aa).

A helical; Signal-anchor for type II membrane protein transmembrane segment spans residues Ala-18–Leu-38. Asn-131 carries N-linked (GlcNAc...) asparagine glycosylation. His-302–Arg-304 contributes to the substrate binding site. 2 N-linked (GlcNAc...) asparagine glycosylation sites follow: Asn-373 and Asn-474.

Belongs to the glycosyltransferase GT106 family.

Its subcellular location is the membrane. The protein operates within glycan metabolism. The protein is O-fucosyltransferase 31 of Arabidopsis thaliana (Mouse-ear cress).